Reading from the N-terminus, the 418-residue chain is Gamma-glutamyl phosphate reductase (418 aa).

It belongs to the gamma-glutamyl phosphate reductase family.

The protein resides in the cytoplasm. It carries out the reaction L-glutamate 5-semialdehyde + phosphate + NADP(+) = L-glutamyl 5-phosphate + NADPH + H(+). The protein operates within amino-acid biosynthesis; L-proline biosynthesis; L-glutamate 5-semialdehyde from L-glutamate: step 2/2. Catalyzes the NADPH-dependent reduction of L-glutamate 5-phosphate into L-glutamate 5-semialdehyde and phosphate. The product spontaneously undergoes cyclization to form 1-pyrroline-5-carboxylate. The chain is Gamma-glutamyl phosphate reductase from Desulfatibacillum aliphaticivorans.